The following is a 286-amino-acid chain: Shikimate dehydrogenase (NADP(+)) (286 aa).

Residues 19-21 and Thr-66 contribute to the shikimate site; that span reads SVS. Lys-70 (proton acceptor) is an active-site residue. 2 residues coordinate shikimate: Asn-91 and Asp-106. Residues 130–134 and Ala-225 each bind NADP(+); that span reads GAGGS. A shikimate-binding site is contributed by Tyr-227. Gly-248 contributes to the NADP(+) binding site.

Belongs to the shikimate dehydrogenase family. In terms of assembly, homodimer.

It catalyses the reaction shikimate + NADP(+) = 3-dehydroshikimate + NADPH + H(+). It participates in metabolic intermediate biosynthesis; chorismate biosynthesis; chorismate from D-erythrose 4-phosphate and phosphoenolpyruvate: step 4/7. In terms of biological role, involved in the biosynthesis of the chorismate, which leads to the biosynthesis of aromatic amino acids. Catalyzes the reversible NADPH linked reduction of 3-dehydroshikimate (DHSA) to yield shikimate (SA). The sequence is that of Shikimate dehydrogenase (NADP(+)) from Dehalococcoides mccartyi (strain ATCC BAA-2266 / KCTC 15142 / 195) (Dehalococcoides ethenogenes (strain 195)).